The sequence spans 97 residues: Peptide Y (97 aa).

Positions 1–28 (MANMLRSWMMLAALAVCLLVCLSSFADA) are cleaved as a signal peptide. Residue Tyr-64 is modified to Tyrosine amide. Positions 68–97 (STPEQAVAWLLFGADSSQDAEPRLDYSDQW) are cleaved as a propeptide — C-terminal extension.

It belongs to the NPY family.

It is found in the secreted. This is Peptide Y from Dicentrarchus labrax (European seabass).